Consider the following 471-residue polypeptide: Uronate isomerase (471 aa).

This sequence belongs to the metallo-dependent hydrolases superfamily. Uronate isomerase family.

It catalyses the reaction D-glucuronate = D-fructuronate. The catalysed reaction is aldehydo-D-galacturonate = keto-D-tagaturonate. Its pathway is carbohydrate metabolism; pentose and glucuronate interconversion. The chain is Uronate isomerase from Xanthomonas campestris pv. campestris (strain 8004).